A 165-amino-acid chain; its full sequence is Protein SEED AND ROOT HAIR PROTECTIVE PROTEIN (165 aa).

An N-terminal signal peptide occupies residues 1–24; it reads MAFSRLSFAASLIVFSSLIISSVA.

This sequence belongs to the plant proline-rich protein superfamily. Root hair and seed specific expression. Also observed in other tissues including siliques, roots and flowers.

It is found in the secreted. It localises to the cell wall. Functionally, contributes to cell wall structure in root hairs and seeds, especially in phosphate (Pi) deprivation conditions or in the presence of ethylene. Particularly important in maternal tissues (pericarps and seed coats) during seed development, especially under stress conditions. Confers thermotolerance in seed germination rate. This is Protein SEED AND ROOT HAIR PROTECTIVE PROTEIN from Arabidopsis thaliana (Mouse-ear cress).